A 188-amino-acid polypeptide reads, in one-letter code: MPPLTQDPQSVDARAVANLLLDKAAALDIPISNLALQKLLYFAHGRFLVDKGRPLVNGFFEAWKFGPVHPVVYRCFSANGPKYIINRAIKKDILSGLHIIVSPPRDQDIHEGIERVLLTMGRMSASQLVAVSHASGGPWDVIANGPGTNLGLGLRICDKVIKDRFRFQKVSVSVPPGLGDTLEEAPPS.

As to quaternary structure, interacts with cognate toxin SocB and with ClpX.

Functionally, antitoxin component of an atypical type II toxin-antitoxin (TA) system. Unlike most type II TA systems, neutralizes the toxic activity of cognate toxin SocB by acting as an adapter to promote its degradation by ClpXP; degradation is dependent on the N-terminus of ClpX. This Caulobacter vibrioides (strain NA1000 / CB15N) (Caulobacter crescentus) protein is Antitoxin SocA.